Reading from the N-terminus, the 2697-residue chain is Target of rapamycin homolog (2697 aa).

Positions 1–25 are disordered; the sequence is MLQQHGISFQMNADRQNKAATTSNR. 7 HEAT repeats span residues 235–272, 649–687, 689–726, 731–768, 815–853, 863–900, and 1073–1110; these read LRVNLFFKYIFNAVRDKNPAVRIAGIDALHVVLTIVSQ, QTIYGVLRAVCSVIVNDQDVRVRMQVISCFGQMPRPFLA, LAQPEMLEVQFMALHDEKLEMQQACVTLLGRLAELNPA, RLRLMLLETLSQMQQSGQARLEQHSAKMIAQLAKQSPK, KNLKPLFEKLTHMINDSSSLHKREAALRAIGGICRSTAY, SLLDDLLRILKTVMSNTMRREAIKTLGILGAIDPYTHK, and KYTGELIPYLLTVLQTDKTKERVLTVKVMESIQKLTHC. The FAT domain maps to 1438–2153; sequence VLGRWAEQTK…IYALTVASRS (716 aa). Disordered regions lie at residues 1945–1981 and 2017–2039; these read TVISPPQQPQQPKKMHIPPVTRATSPPPPAQKSPQPA and SNSSLPPQHHHVSPLSNDSPSNS. Residues 1969–1981 show a composition bias toward pro residues; that stretch reads SPPPPAQKSPQPA. The span at 2030-2039 shows a compositional bias: polar residues; sequence PLSNDSPSNS. A PI3K/PI4K catalytic domain is found at 2332–2647; sequence FSSKMNVITS…TTDSIMETIK (316 aa). Residues 2338–2344 are G-loop; it reads VITSKQR. Positions 2512-2520 are catalytic loop; the sequence is GLGDRHPSN. Residues 2532–2557 are activation loop; sequence HIDFGDCFEVAMLREKFPERVPFRLT. The interval 2615 to 2635 is disordered; it reads DPKTRKDTGGRQNMAGAVLPS. Residues 2665 to 2697 form the FATC domain; sequence EPLQVTEQLAMLTEQATSPLNLCQSYIGWCPFW.

The protein belongs to the PI3/PI4-kinase family. Ubiquitous. Expressed in all major tissues and organs, including the intestine, gonads and hypodermal cells. Expressed in neurons.

Its subcellular location is the nucleus. The catalysed reaction is L-seryl-[protein] + ATP = O-phospho-L-seryl-[protein] + ADP + H(+). It carries out the reaction L-threonyl-[protein] + ATP = O-phospho-L-threonyl-[protein] + ADP + H(+). Its function is as follows. Serine/threonine-protein kinase that regulates the mRNA translation machinery, probably by modulating the activity of translation factors such as eIF-4G and eIF-2. It may have some protein kinase activity instead of lipid kinase activity. May play a role in P-granule degradation by autophagy in somatic cells during embryogenesis. Required, during larval development, for the establishment of the proper number of germline progenitors, probably upstream of rsks-1 and ife-1. Required for larval development. May act as a mediator of lifespan regulation by insulin signaling and nutrient sensing. The polypeptide is Target of rapamycin homolog (Caenorhabditis elegans).